The sequence spans 454 residues: UDP-N-acetylmuramate--L-alanine ligase (454 aa).

Residue 113-119 (GSHGKTT) coordinates ATP.

This sequence belongs to the MurCDEF family.

It localises to the cytoplasm. It carries out the reaction UDP-N-acetyl-alpha-D-muramate + L-alanine + ATP = UDP-N-acetyl-alpha-D-muramoyl-L-alanine + ADP + phosphate + H(+). Its pathway is cell wall biogenesis; peptidoglycan biosynthesis. Functionally, cell wall formation. This is UDP-N-acetylmuramate--L-alanine ligase from Aquifex aeolicus (strain VF5).